Here is a 284-residue protein sequence, read N- to C-terminus: Bifunctional protein FolD (284 aa).

NADP(+) is bound by residues 165-167 (GRS), S190, and I231.

Belongs to the tetrahydrofolate dehydrogenase/cyclohydrolase family. Homodimer.

It carries out the reaction (6R)-5,10-methylene-5,6,7,8-tetrahydrofolate + NADP(+) = (6R)-5,10-methenyltetrahydrofolate + NADPH. The enzyme catalyses (6R)-5,10-methenyltetrahydrofolate + H2O = (6R)-10-formyltetrahydrofolate + H(+). Its pathway is one-carbon metabolism; tetrahydrofolate interconversion. Catalyzes the oxidation of 5,10-methylenetetrahydrofolate to 5,10-methenyltetrahydrofolate and then the hydrolysis of 5,10-methenyltetrahydrofolate to 10-formyltetrahydrofolate. In Streptococcus thermophilus (strain ATCC BAA-250 / LMG 18311), this protein is Bifunctional protein FolD.